The sequence spans 350 residues: Secreted effector protein PipB2 (350 aa).

Pentapeptide repeat domains are found at residues 162–201, 202–241, 247–286, and 287–326; these read ANLTAENLCDADLSGANLEGAVLFMADCEGANFKGANLSG, TSLGDSNFKNACLEDGIMCGATLDHANLTGANLQHASLLG, CNCSGANMDHTNLSGATLIRADMSGATLQGATIMAAIMED, and AVLTRANLRKASFISTNLDGADLAEANLNNTCFKDCTLTH.

As to quaternary structure, interacts with the host kinesin light chain (KLC), a subunit of the kinesin-1 motor complex.

The protein resides in the secreted. Its subcellular location is the host membrane. Its function is as follows. Effector proteins function to alter host cell physiology and promote bacterial survival in host tissues. Involved in the reorganization of late endosome/lysosome (LE/Lys) compartments in mammalian cells. Necessary and sufficient to link kinesin-1 onto the Salmonella-containing vacuole (SCV) membrane. Required for centrifugal extension of lysosomal glycoprotein-rich membrane tubules, known as Salmonella-induced filaments (Sifs), away from the SCV and toward the cell periphery. Required for virulence, but not for intracellular survival and replication in phagocytic cells. The protein is Secreted effector protein PipB2 (pipB2) of Salmonella paratyphi A (strain ATCC 9150 / SARB42).